The chain runs to 69 residues: Cold shock protein CapB (69 aa).

The 60-residue stretch at 7–66 folds into the CSD domain; that stretch reads GTVKWFNDEKGFGFITPQSGDDLFVHFKAIQSDGFKSLKEGQQVSFIATRGQKGMQAEEV.

It is found in the cytoplasm. Functionally, affects cell viability at low temperatures. The polypeptide is Cold shock protein CapB (capB) (Pseudomonas fragi).